Here is a 554-residue protein sequence, read N- to C-terminus: Methyl-coenzyme M reductase II subunit alpha (554 aa).

Q151 lines the coenzyme F430 pocket. Residues R229, K260–H261, and R274 each bind coenzyme B. Coenzyme M is bound by residues Y336 and Y447.

The protein belongs to the methyl-coenzyme M reductase alpha subunit family. As to quaternary structure, MCR is a hexamer of two alpha, two beta, and two gamma chains, forming a dimer of heterotrimers. The cofactor is coenzyme F430.

The enzyme catalyses coenzyme B + methyl-coenzyme M = methane + coenzyme M-coenzyme B heterodisulfide. The protein operates within one-carbon metabolism; methyl-coenzyme M reduction; methane from methyl-coenzyme M: step 1/1. Functionally, component of the methyl-coenzyme M reductase (MCR) I that catalyzes the reductive cleavage of methyl-coenzyme M (CoM-S-CH3 or 2-(methylthio)ethanesulfonate) using coenzyme B (CoB or 7-mercaptoheptanoylthreonine phosphate) as reductant which results in the production of methane and the mixed heterodisulfide of CoB and CoM (CoM-S-S-CoB). This is the final step in methanogenesis. In Methanothermus fervidus (strain ATCC 43054 / DSM 2088 / JCM 10308 / V24 S), this protein is Methyl-coenzyme M reductase II subunit alpha (mrtA).